The chain runs to 153 residues: Bursicon (153 aa).

A signal peptide spans 1-22; sequence MLLYHIVGASVLICLLNETAKA. 5 disulfide bridges follow: Cys29–Cys78, Cys43–Cys92, Cys53–Cys113, Cys57–Cys115, and Cys75–Cys118. In terms of domain architecture, CTCK spans 29–119; sequence CQATPVIHFL…PLECMCRPCT (91 aa).

Heterodimer of burs and pburs.

The protein resides in the secreted. Functionally, final heterodimeric neurohormone released at the end of the molting cycle, involved in the sclerotization (tanning) of the insect cuticle, melanization and wing spreading. The polypeptide is Bursicon (Apis mellifera (Honeybee)).